A 108-amino-acid polypeptide reads, in one-letter code: Protein YcgL (108 aa).

The region spanning 12 to 96 (MFCVIYRSSK…PPEDLLKQHL (85 aa)) is the YcgL domain.

In Escherichia coli O9:H4 (strain HS), this protein is Protein YcgL.